The sequence spans 355 residues: S-adenosylmethionine:tRNA ribosyltransferase-isomerase (355 aa).

Belongs to the QueA family. In terms of assembly, monomer.

The protein localises to the cytoplasm. The enzyme catalyses 7-aminomethyl-7-carbaguanosine(34) in tRNA + S-adenosyl-L-methionine = epoxyqueuosine(34) in tRNA + adenine + L-methionine + 2 H(+). It participates in tRNA modification; tRNA-queuosine biosynthesis. Its function is as follows. Transfers and isomerizes the ribose moiety from AdoMet to the 7-aminomethyl group of 7-deazaguanine (preQ1-tRNA) to give epoxyqueuosine (oQ-tRNA). The polypeptide is S-adenosylmethionine:tRNA ribosyltransferase-isomerase (Aeromonas hydrophila subsp. hydrophila (strain ATCC 7966 / DSM 30187 / BCRC 13018 / CCUG 14551 / JCM 1027 / KCTC 2358 / NCIMB 9240 / NCTC 8049)).